The following is a 148-amino-acid chain: Nucleoside diphosphate kinase (148 aa).

ATP-binding residues include Lys-9, Phe-57, Arg-85, Thr-91, Arg-102, and Asn-112. A Phosphothreonine modification is found at Thr-91. His-115 acts as the Pros-phosphohistidine intermediate in catalysis. A Phosphoserine modification is found at Ser-122.

It belongs to the NDK family. As to quaternary structure, homotetramer. Mg(2+) is required as a cofactor.

Its subcellular location is the cytoplasm. It catalyses the reaction a 2'-deoxyribonucleoside 5'-diphosphate + ATP = a 2'-deoxyribonucleoside 5'-triphosphate + ADP. The enzyme catalyses a ribonucleoside 5'-diphosphate + ATP = a ribonucleoside 5'-triphosphate + ADP. Major role in the synthesis of nucleoside triphosphates other than ATP. The ATP gamma phosphate is transferred to the NDP beta phosphate via a ping-pong mechanism, using a phosphorylated active-site intermediate. This chain is Nucleoside diphosphate kinase, found in Bacillus licheniformis (strain ATCC 14580 / DSM 13 / JCM 2505 / CCUG 7422 / NBRC 12200 / NCIMB 9375 / NCTC 10341 / NRRL NRS-1264 / Gibson 46).